A 449-amino-acid chain; its full sequence is MAAVVKSVALAGRPTTPDRVHEVLGRSMLVDGLDIVLDLTRSGGSYLVDAITGRRYLDMFTFVASSALGMNPPALVDDREFHAELMQAALNKPSNSDVYSVAMARFVETFARVLGDPALPHLFFVEGGALAVENALKAAFDWKSRHNQAHGIDPALGTQVLHLRGAFHGRSGYTLSLTNTKPTITARFPKFDWPRIDAPYMRPGLDEPAMAALEAEALRQARAAFETRPHDIACFVAEPIQGEGGDRHFRPEFFAAMRELCDEFDALLIFDEVQTGCGLTGTAWAYQQLDVAPDIVAFGKKTQVCGVMAGRRVDEVADNVFAVPSRLNSTWGGNLTDMVRARRILEVIEAEGLFERAVQHGKYLRARLDELAADFPAVVLDPRGRGLMCAFSLPTTADRDELIRQLWQRAVIVLPAGADTVRFRPPLTVSTAEIDAAIAAVRSALPVVT.

2 residues coordinate pyridoxal 5'-phosphate: G128 and A129. R170 and Q274 together coordinate 2-oxoglutarate. R170 lines the L-lysine pocket. Residue Q274 participates in pyridoxal 5'-phosphate binding. K300 carries the N6-(pyridoxal phosphate)lysine modification. R422 is a binding site for 2-oxoglutarate.

This sequence belongs to the class-III pyridoxal-phosphate-dependent aminotransferase family. Requires pyridoxal 5'-phosphate as cofactor.

It catalyses the reaction L-lysine + 2-oxoglutarate = (S)-2-amino-6-oxohexanoate + L-glutamate. In terms of biological role, catalyzes the transfer of the terminal amino group of L-lysine to alpha-ketoglutarate to yield L-glutamate and 2-aminoadipate 6-semialdehyde ((S)-2-amino-6-oxohexanoate), which is spontaneously converted to the dehydrated form 1-piperideine 6-carboxylate. The chain is L-lysine-epsilon aminotransferase from Mycobacterium bovis (strain ATCC BAA-935 / AF2122/97).